The chain runs to 452 residues: MARRRRRACIALFLVLLFAFGTLMGLRTLKAPDGLPALGPGPELAPFERRPEGNPAPARAPAAPAAPPPPPPRTAAPRASLGPAEADPAPRQSLRVYSDLHAFYYSWYGSPRREGHYIHWDHVMVPHWDPKISASYPRGRHSPPDDLGSSFYPELGPYSSRDPDVLREHMTQLKEAAIGVLVLSWYPPGMADDNGEPTDDLVPAILDTAHQYNIQVAFHIQPYKGRDDITVHDNIKYIIDTYGSHGAFYRYKNSMGKSLPLFYIYDSYLTSPEAWAHLLTQNGPHSIRNTPYDGVFIALLVEESHTHDILAAGFDGMYTYFASNGFSFGSSHQNWKAVKNFCDTNNLMFIPSVGPGYIDTSIRPWNNHNTRNRVNGKYYETALQAALTVRPEIVSITSFNEWHEGTQIEKAVPKTTPTRLYLDYLPHQSSLYLELTRRWAEHFIKEKEQWLM.

Residues 1–8 are Cytoplasmic-facing; that stretch reads MARRRRRA. The helical; Signal-anchor for type II membrane protein transmembrane segment at 9–29 threads the bilayer; the sequence is CIALFLVLLFAFGTLMGLRTL. Residues 30–452 lie on the Lumenal side of the membrane; the sequence is KAPDGLPALG…FIKEKEQWLM (423 aa). Residues 40–90 form a disordered region; the sequence is PGPELAPFERRPEGNPAPARAPAAPAAPPPPPPRTAAPRASLGPAEADPAP. Residues 64–74 show a composition bias toward pro residues; the sequence is PAAPPPPPPRT.

The protein belongs to the glycosyl hydrolase 99 family.

The protein resides in the golgi apparatus membrane. This Mus musculus (Mouse) protein is Glycoprotein endo-alpha-1,2-mannosidase-like protein (Maneal).